The following is a 547-amino-acid chain: Chaperonin GroEL (547 aa).

ATP-binding positions include 30 to 33, Lys-51, 87 to 91, Gly-415, and Asp-496; these read TLGP and DGTTT.

It belongs to the chaperonin (HSP60) family. Forms a cylinder of 14 subunits composed of two heptameric rings stacked back-to-back. Interacts with the co-chaperonin GroES.

The protein resides in the cytoplasm. It carries out the reaction ATP + H2O + a folded polypeptide = ADP + phosphate + an unfolded polypeptide.. Functionally, together with its co-chaperonin GroES, plays an essential role in assisting protein folding. The GroEL-GroES system forms a nano-cage that allows encapsulation of the non-native substrate proteins and provides a physical environment optimized to promote and accelerate protein folding. This is Chaperonin GroEL from Actinobacillus pleuropneumoniae serotype 7 (strain AP76).